Consider the following 328-residue polypeptide: tRNA uridine(34) hydroxylase (328 aa).

Positions 130–224 (LDEDTVVLDT…YGKDPEVQGE (95 aa)) constitute a Rhodanese domain. C184 (cysteine persulfide intermediate) is an active-site residue.

This sequence belongs to the TrhO family.

It carries out the reaction uridine(34) in tRNA + AH2 + O2 = 5-hydroxyuridine(34) in tRNA + A + H2O. In terms of biological role, catalyzes oxygen-dependent 5-hydroxyuridine (ho5U) modification at position 34 in tRNAs. This is tRNA uridine(34) hydroxylase from Streptococcus pyogenes serotype M6 (strain ATCC BAA-946 / MGAS10394).